We begin with the raw amino-acid sequence, 148 residues long: Sec-independent protein translocase protein TatB (148 aa).

A helical transmembrane segment spans residues 1–21; it reads MFDIGFWELVVIGIVALVVLG.

The protein belongs to the TatB family. The Tat system comprises two distinct complexes: a TatABC complex, containing multiple copies of TatA, TatB and TatC subunits, and a separate TatA complex, containing only TatA subunits. Substrates initially bind to the TatABC complex, which probably triggers association of the separate TatA complex to form the active translocon.

The protein localises to the cell inner membrane. Its function is as follows. Part of the twin-arginine translocation (Tat) system that transports large folded proteins containing a characteristic twin-arginine motif in their signal peptide across membranes. Together with TatC, TatB is part of a receptor directly interacting with Tat signal peptides. TatB may form an oligomeric binding site that transiently accommodates folded Tat precursor proteins before their translocation. The polypeptide is Sec-independent protein translocase protein TatB (Aeromonas salmonicida (strain A449)).